The chain runs to 135 residues: Large ribosomal subunit protein uL16c (135 aa).

Belongs to the universal ribosomal protein uL16 family. Part of the 50S ribosomal subunit.

It localises to the plastid. The protein resides in the chloroplast. This is Large ribosomal subunit protein uL16c from Cucumis sativus (Cucumber).